Here is a 394-residue protein sequence, read N- to C-terminus: Fructose-bisphosphate aldolase, chloroplastic (394 aa).

Residues M1–A46 constitute a chloroplast transit peptide. Positions 93 and 183 each coordinate substrate. The active-site Proton acceptor is the E223. The Schiff-base intermediate with dihydroxyacetone-P role is filled by K265.

The protein belongs to the class I fructose-bisphosphate aldolase family.

The protein resides in the plastid. Its subcellular location is the chloroplast. The enzyme catalyses beta-D-fructose 1,6-bisphosphate = D-glyceraldehyde 3-phosphate + dihydroxyacetone phosphate. The protein operates within carbohydrate degradation; glycolysis; D-glyceraldehyde 3-phosphate and glycerone phosphate from D-glucose: step 4/4. The protein is Fructose-bisphosphate aldolase, chloroplastic of Spinacia oleracea (Spinach).